The sequence spans 113 residues: Large ribosomal subunit protein uL22 (113 aa).

This sequence belongs to the universal ribosomal protein uL22 family. As to quaternary structure, part of the 50S ribosomal subunit.

Its function is as follows. This protein binds specifically to 23S rRNA; its binding is stimulated by other ribosomal proteins, e.g. L4, L17, and L20. It is important during the early stages of 50S assembly. It makes multiple contacts with different domains of the 23S rRNA in the assembled 50S subunit and ribosome. In terms of biological role, the globular domain of the protein is located near the polypeptide exit tunnel on the outside of the subunit, while an extended beta-hairpin is found that lines the wall of the exit tunnel in the center of the 70S ribosome. The protein is Large ribosomal subunit protein uL22 of Xanthomonas oryzae pv. oryzae (strain MAFF 311018).